A 570-amino-acid chain; its full sequence is Sulfite reductase [NADPH] hemoprotein beta-component (570 aa).

4 residues coordinate [4Fe-4S] cluster: cysteine 434, cysteine 440, cysteine 479, and cysteine 483. Cysteine 483 contacts siroheme.

The protein belongs to the nitrite and sulfite reductase 4Fe-4S domain family. In terms of assembly, alpha(8)-beta(8). The alpha component is a flavoprotein, the beta component is a hemoprotein. It depends on siroheme as a cofactor. The cofactor is [4Fe-4S] cluster.

The enzyme catalyses hydrogen sulfide + 3 NADP(+) + 3 H2O = sulfite + 3 NADPH + 4 H(+). The protein operates within sulfur metabolism; hydrogen sulfide biosynthesis; hydrogen sulfide from sulfite (NADPH route): step 1/1. In terms of biological role, component of the sulfite reductase complex that catalyzes the 6-electron reduction of sulfite to sulfide. This is one of several activities required for the biosynthesis of L-cysteine from sulfate. The sequence is that of Sulfite reductase [NADPH] hemoprotein beta-component from Shigella sonnei (strain Ss046).